Consider the following 99-residue polypeptide: Large ribosomal subunit protein uL23 (99 aa).

The protein belongs to the universal ribosomal protein uL23 family. As to quaternary structure, part of the 50S ribosomal subunit. Contacts protein L29, and trigger factor when it is bound to the ribosome.

Functionally, one of the early assembly proteins it binds 23S rRNA. One of the proteins that surrounds the polypeptide exit tunnel on the outside of the ribosome. Forms the main docking site for trigger factor binding to the ribosome. The polypeptide is Large ribosomal subunit protein uL23 (Rhodopseudomonas palustris (strain BisB5)).